Reading from the N-terminus, the 81-residue chain is Sulfur carrier protein TusA (81 aa).

C19 (cysteine persulfide intermediate) is an active-site residue.

This sequence belongs to the sulfur carrier protein TusA family. As to quaternary structure, interacts with IscS.

It localises to the cytoplasm. It participates in tRNA modification. Its function is as follows. Sulfur carrier protein involved in sulfur trafficking in the cell. Part of a sulfur-relay system required for 2-thiolation during synthesis of 2-thiouridine of the modified wobble base 5-methylaminomethyl-2-thiouridine (mnm(5)s(2)U) in tRNA. Interacts with IscS and stimulates its cysteine desulfurase activity. Accepts an activated sulfur from IscS, which is then transferred to TusD, and thus determines the direction of sulfur flow from IscS to 2-thiouridine formation. Also appears to be involved in sulfur transfer for the biosynthesis of molybdopterin. The chain is Sulfur carrier protein TusA from Klebsiella pneumoniae subsp. pneumoniae (strain ATCC 700721 / MGH 78578).